The primary structure comprises 374 residues: 1,3,6,8-tetrahydroxynaphthalene synthase (374 aa).

Cys138 is an active-site residue.

Belongs to the thiolase-like superfamily. Chalcone/stilbene synthases family. Homodimer.

It catalyses the reaction 5 malonyl-CoA + 5 H(+) = naphthalene-1,3,6,8-tetrol + 5 CO2 + 5 CoA + H2O. It functions in the pathway pigment biosynthesis; melanin biosynthesis. Its function is as follows. Involved in the biosynthesis of melanin but also various secondary metabolites containing a naphthoquinone ring. Catalyzes the iterative condensation of five CoA-linked malonyl units to form a pentaketide intermediate. THNS subsequently catalyzes the dual intramolecular Claisen and aldol condensations of this linear intermediate to produce the fused ring of 1,3,6,8-tetrahydroxynaphthalene (THN). The polypeptide is 1,3,6,8-tetrahydroxynaphthalene synthase (Streptomyces coelicolor (strain ATCC BAA-471 / A3(2) / M145)).